Reading from the N-terminus, the 250-residue chain is Bacteriorhodopsin (250 aa).

The Extracellular portion of the chain corresponds to 1-18; that stretch reads MCCAALAPPMAATVGPES. The helical transmembrane segment at 19-37 threads the bilayer; the sequence is IWLWIGTIGMTLGTLYFVG. The Cytoplasmic portion of the chain corresponds to 38 to 51; sequence RGRGVRDRKMQEFY. Residues 52 to 70 traverse the membrane as a helical segment; that stretch reads IITIFITTIAAAMYFAMAT. Residues 71–86 are Extracellular-facing; it reads GFGVTEVMVGDEALTI. A helical membrane pass occupies residues 87 to 104; that stretch reads YWARYADWLFTTPLLLLD. Residues 105-115 are Cytoplasmic-facing; that stretch reads LSLLAGANRNT. Residues 116 to 135 form a helical membrane-spanning segment; the sequence is IATLIGLDVFMIGTGAIAAL. Over 136–142 the chain is Extracellular; that stretch reads SSTPGTR. A helical transmembrane segment spans residues 143–162; sequence IAWWAISTGALLALLYVLVG. Topologically, residues 163 to 180 are cytoplasmic; sequence TLSENARNRAPEVASLFG. Residues 181–199 traverse the membrane as a helical segment; the sequence is RLRNLVIALWFLYPVVWIL. Over 200–212 the chain is Extracellular; that stretch reads GTEGTFGILPLYW. The helical transmembrane segment at 213-232 threads the bilayer; sequence ETAAFMVLDLSAKVGFGVIL. At Lys-225 the chain carries N6-(retinylidene)lysine. The Cytoplasmic portion of the chain corresponds to 233–250; it reads LQSRSVLERVATPTAAPT.

The protein belongs to the archaeal/bacterial/fungal opsin family.

The protein localises to the cell membrane. Its function is as follows. Light-driven proton pump. The protein is Bacteriorhodopsin (bop) of Haloterrigena sp. (strain arg-4).